The primary structure comprises 123 residues: UPF0482 protein YE2026 (123 aa).

The N-terminal stretch at 1 to 31 (MKITSLPRLMRVFLPVAVLALPLAWQTAALA) is a signal peptide. Residues 47-66 (GNNDPMSKEQARQSQQQWDD) are disordered.

Belongs to the UPF0482 family.

This chain is UPF0482 protein YE2026, found in Yersinia enterocolitica serotype O:8 / biotype 1B (strain NCTC 13174 / 8081).